Reading from the N-terminus, the 417-residue chain is CinA-like protein (417 aa).

It belongs to the CinA family.

The polypeptide is CinA-like protein (Synechococcus sp. (strain RCC307)).